Consider the following 406-residue polypeptide: Protein PHYTOCHROME KINASE SUBSTRATE 4 (406 aa).

Over residues 106 to 119 (SWNSQTGLLSNKNR) the composition is skewed to polar residues. The disordered stretch occupies residues 106-133 (SWNSQTGLLSNKNRQGSDRDGRRSSKKG).

The protein belongs to the PKS family. As to quaternary structure, interacts in vitro with PHYA and PHYB. Expressed in the hypocotyl elongation zone. Not found in the root elongation zone.

In terms of biological role, modulates phytochrome-mediated control of hypocotyl growth orientation. Involved in PHYA and PHYB signaling. Acts as an inhibitor of asymmetric growth. Not involved in the control of leaf flattening. In Arabidopsis thaliana (Mouse-ear cress), this protein is Protein PHYTOCHROME KINASE SUBSTRATE 4 (PKS4).